Reading from the N-terminus, the 151-residue chain is MASMQKRLQKELLALQNDPPPGMTLNEKSVQNTITQWIVDMEGASGTVYEGEKFQLLFKFSSRYPFDSPQVMFTGDNIPVHPHVYSNGHICLSILTEDWSPALSVQSVCLSIISMLSSCKEKRRPPDNSFYVRTCNKNPKKTKWWYHDDTC.

The region spanning Ser-3–Cys-151 is the UBC core domain. Cys-91 serves as the catalytic Glycyl thioester intermediate.

Belongs to the ubiquitin-conjugating enzyme family.

It is found in the nucleus. It catalyses the reaction S-ubiquitinyl-[E1 ubiquitin-activating enzyme]-L-cysteine + [E2 ubiquitin-conjugating enzyme]-L-cysteine = [E1 ubiquitin-activating enzyme]-L-cysteine + S-ubiquitinyl-[E2 ubiquitin-conjugating enzyme]-L-cysteine.. The catalysed reaction is S-ubiquitinyl-[E1 ubiquitin-activating enzyme]-L-cysteine + [acceptor protein]-N-terminal-amino acid = [E1 ubiquitin-activating enzyme]-L-cysteine + N-terminal-ubiquitinyl-[acceptor protein].. It functions in the pathway protein modification; protein ubiquitination. Functionally, accepts ubiquitin from the E1 complex and catalyzes its covalent attachment to other proteins. Catalyzes monoubiquitination. Involved in degradation of misfolded chaperone substrate and DNA repair. The chain is Probable ubiquitin-conjugating enzyme E2 W-B (ube2wb) from Danio rerio (Zebrafish).